An 861-amino-acid polypeptide reads, in one-letter code: Protein argonaute-4 (861 aa).

Residues 219-338 (PIIEFMCEVL…LPLEVCNIVA (120 aa)) form the PAZ domain. One can recognise a Piwi domain in the interval 509-820 (LIVVILPGKT…VAFRARYHLV (312 aa)). Residues 825–846 (DSAEGSHVSGQSNGRDPQALAK) are disordered.

It belongs to the argonaute family. Ago subfamily. In terms of assembly, interacts with EIF4B, IMP8, PRMT5, TNRC6A and TNRC6B. Interacts with ZFP36. Ubiquitinated on surface-exposed lysines by a SCF-like E3 ubiquitin-protein ligase complex containing ZSWIM8 during target-directed microRNA degradation (TDMD), a process that mediates degradation of microRNAs (miRNAs). Ubiquitination by the SCF-like E3 ubiquitin-protein ligase complex containing ZSWIM8 leads to its subsequent degradation, thereby exposing miRNAs for degradation. ZSWIM8 recognizes and binds AGO4 when it is engaged with a TDMD target.

The protein resides in the cytoplasm. The protein localises to the P-body. In terms of biological role, required for RNA-mediated gene silencing (RNAi). Binds to short RNAs such as microRNAs (miRNAs) and represses the translation of mRNAs which are complementary to them. Lacks endonuclease activity and does not appear to cleave target mRNAs. This chain is Protein argonaute-4 (Ago4), found in Mus musculus (Mouse).